The chain runs to 670 residues: MVEPDMQKKASGGSGGSEMDTLNATSNSSKQGVSNNKRNPVSKKKPGNKVSDGRDNAHNYHGEGRRKSSKQQRSRTPYKETSTRINDQDIDLSIQEEILGGNFKLRGRKTQVSINHLLNFQLPEVEREKSRSSSSKKSNRRRDEHVHLHGDTFVNVNYRLLVDDRFDYPEQNCNPNVPVDQEKILRVIVPKGQNCSICLSEEPVAPRMVTCGHIFCLSCLLNFFSIEETVKNKETGYSKKKKYKECPLCGSIIGPKRVKPVLYEDDFDVTRLNQKPEPGATVHLQLMCKPHGSLLPLPVALHLDPLKCGNFPPANLGSIKHYAHIMKCGVSYSLELYQKDIVAIQEQYEIDKAIYNDSGKFVKQSIENINDQISTLLAATTDLSPLSNDINNGLDNFHFDDDLLTKYDDSSAYFFYQTLVASSTKYFLSPLDVKILLTIFHYYSKFPESIETTVENIHYDTVVTEQLIRRYKYIGHLPIGTEIALLDLDWRKIPFLPKEIYEQFAHELKQRRRKFTMKKQKEDKEKKLYEKRLEQEHAEFYRKENGNSLKFEDSVQMATHYESIVSSSIPLNSLGISMLGPPTNSCSTPQKQAPSHTKRTIWGTSIAVTEDEKASKENKEFQDMLLQRIRQEDSSDVTDSTDSPPTSNGKRGRKKKGKVMLFSSNHQALG.

Disordered regions lie at residues 1–84 (MVEP…TSTR) and 124–145 (EVER…RDEH). Residues 20 to 39 (DTLNATSNSSKQGVSNNKRN) are compositionally biased toward polar residues. Positions 51–66 (SDGRDNAHNYHGEGRR) are enriched in basic and acidic residues. The segment at 195 to 250 (CSICLSEEPVAPRMVTCGHIFCLSCLLNFFSIEETVKNKETGYSKKKKYKECPLCG) adopts an RING-type zinc-finger fold. The disordered stretch occupies residues 609–670 (TEDEKASKEN…LFSSNHQALG (62 aa)). A compositionally biased stretch (basic and acidic residues) spans 610–622 (EDEKASKENKEFQ). Residues 637-649 (VTDSTDSPPTSNG) show a composition bias toward low complexity.

It belongs to the RNF10 family.

The protein resides in the cytoplasm. The enzyme catalyses S-ubiquitinyl-[E2 ubiquitin-conjugating enzyme]-L-cysteine + [acceptor protein]-L-lysine = [E2 ubiquitin-conjugating enzyme]-L-cysteine + N(6)-ubiquitinyl-[acceptor protein]-L-lysine.. It participates in protein modification; protein ubiquitination. In terms of biological role, E3 ubiquitin-protein ligase involved in the degradation of non-functional 18S rRNAs in response to stalled ribosomes. Catalyzes monoubiquitination of RPS3/uS3 in response to stalled ribosomes, initiating a HEL2-dependent response that activates the degradation of non-functional 18S rRNAs. The polypeptide is E3 ubiquitin-protein ligase MAG2 (Saccharomyces cerevisiae (strain ATCC 204508 / S288c) (Baker's yeast)).